The sequence spans 529 residues: Peptide chain release factor 3 (529 aa).

The 270-residue stretch at Ala-11–Met-280 folds into the tr-type G domain. GTP contacts are provided by residues Ser-20–Thr-27, Asp-88–His-92, and Asn-142–Asp-145.

It belongs to the TRAFAC class translation factor GTPase superfamily. Classic translation factor GTPase family. PrfC subfamily.

It localises to the cytoplasm. Increases the formation of ribosomal termination complexes and stimulates activities of RF-1 and RF-2. It binds guanine nucleotides and has strong preference for UGA stop codons. It may interact directly with the ribosome. The stimulation of RF-1 and RF-2 is significantly reduced by GTP and GDP, but not by GMP. The polypeptide is Peptide chain release factor 3 (Edwardsiella ictaluri (strain 93-146)).